The following is a 185-amino-acid chain: Monooxygenase hypC (185 aa).

The next 3 membrane-spanning stretches (helical) occupy residues 35–55 (TGTFLSGAMMSLFLLTIPVIL), 75–95 (GHIQGPLISIATGLLYSYAAY), and 106–126 (PFAVSAAVTVAMIPFTWVFMA). The N-linked (GlcNAc...) asparagine glycan is linked to Asn129. The helical transmembrane segment at 165–185 (ALFPLSGAVLGLLSTCKIVSF) threads the bilayer.

Belongs to the anthrone oxygenase family.

The protein localises to the membrane. The protein operates within mycotoxin biosynthesis. Functionally, monooxygenase; part of the fragmented gene cluster that mediates the biosynthesis of dothistromin (DOTH), a polyketide toxin very similar in structure to the aflatoxin precursor, versicolorin B. The first step of the pathway is the conversion of acetate to norsolorinic acid (NOR) and requires the fatty acid synthase subunits hexA and hexB, as well as the polyketide synthase pksA. PksA combines a hexanoyl starter unit and 7 malonyl-CoA extender units to synthesize the precursor NOR. The hexanoyl starter unit is provided to the acyl-carrier protein (ACP) domain by the fungal fatty acid synthase hexA/hexB. The second step is the conversion of NOR to averantin (AVN) and requires the norsolorinic acid ketoreductase nor1, which catalyzes the dehydration of norsolorinic acid to form (1'S)-averantin. The cytochrome P450 monooxygenase avnA then catalyzes the hydroxylation of AVN to 5'hydroxyaverantin (HAVN). The next step is performed by adhA that transforms HAVN to averufin (AVF). Averufin might then be converted to hydroxyversicolorone by cypX and avfA. Hydroxyversicolorone is further converted versiconal hemiacetal acetate (VHA) by moxY. VHA is then the substrate for the versiconal hemiacetal acetate esterase est1 to yield versiconal (VAL). Versicolorin B synthase vbsA then converts VAL to versicolorin B (VERB) by closing the bisfuran ring. Then, the activity of the versicolorin B desaturase verB leads to versicolorin A (VERA). DotB, a predicted chloroperoxidase, may perform epoxidation of the A-ring of VERA. Alternatively, a cytochrome P450, such as cypX or avnA could catalyze this step. It is also possible that another, uncharacterized, cytochrome P450 enzyme is responsible for this step. Opening of the epoxide could potentially be achieved by the epoxide hydrolase epoA. However, epoA seems not to be required for DOTH biosynthesis, but other epoxide hydrolases may have the ability to complement this hydrolysis. Alternatively, opening of the epoxide ring could be achieved non-enzymatically. The next step is the deoxygenation of ring A to yield the 5,8-dihydroxyanthraquinone which is most likely catalyzed by the NADPH dehydrogenase encoded by ver1. The last stages of DOTH biosynthesis are proposed to involve hydroxylation of the bisfuran. OrdB and norB might have oxidative roles here. An alternative possibility is that cytochrome P450 monoogenases such as avnA and cypX might perform these steps in addition to previously proposed steps. The chain is Monooxygenase hypC from Dothistroma septosporum (strain NZE10 / CBS 128990) (Red band needle blight fungus).